The primary structure comprises 652 residues: Tetracycline resistance protein TetP (652 aa).

The tr-type G domain maps to 2–252; that stretch reads KKIINIGIVA…CSYFPFASND (251 aa). Residues 11 to 18, 75 to 79, and 129 to 132 contribute to the GTP site; these read AHVDAGKT, DTPGH, and NKLD.

It belongs to the TRAFAC class translation factor GTPase superfamily. Classic translation factor GTPase family. TetM/TetO subfamily.

Abolishes the inhibitory effect of tetracyclin on protein synthesis by a non-covalent modification of the ribosomes. This Clostridium perfringens protein is Tetracycline resistance protein TetP (tetP).